A 310-amino-acid polypeptide reads, in one-letter code: MTNLPLRHSAEVAAAKAAGRPIVALESTIITHGMPYPQNLEVARQVEDDLRAAGVTPATIAVMDGTLHIGLEAHQLEALAQAKGVAKLSRADIAACMATGGTGATTVSATMIAAHLAGISVFATGGIGGVHRGAESSFDVSADLLELAQTPVTVVAAGAKAILDVAKTLEVLETQGVPVITVGQDSFPAFWSAESVFKSPLRMDDPVGIAAAHQMRVDLGLPGGQLVANPIPHTDEIPATELAPIIATAQADAEKHGIKGKAVTPYLLQRIYELTQGRSLTANIALVRNNARLAGAIAQALIANARIAGK.

The active-site Proton donor is Glu-26. The substrate site is built by Lys-87 and Val-107. Position 139 (Asp-139) interacts with Mn(2+). 141 to 143 (SAD) provides a ligand contact to substrate. Residue Lys-160 is the Nucleophile of the active site.

It belongs to the pseudouridine-5'-phosphate glycosidase family. In terms of assembly, homotrimer. Mn(2+) is required as a cofactor.

The enzyme catalyses D-ribose 5-phosphate + uracil = psi-UMP + H2O. Its function is as follows. Catalyzes the reversible cleavage of pseudouridine 5'-phosphate (PsiMP) to ribose 5-phosphate and uracil. Functions biologically in the cleavage direction, as part of a pseudouridine degradation pathway. The chain is Pseudouridine-5'-phosphate glycosidase from Roseobacter denitrificans (strain ATCC 33942 / OCh 114) (Erythrobacter sp. (strain OCh 114)).